Here is a 437-residue protein sequence, read N- to C-terminus: Trigger factor (437 aa).

One can recognise a PPIase FKBP-type domain in the interval Gly-165–Ile-251.

Belongs to the FKBP-type PPIase family. Tig subfamily.

The protein localises to the cytoplasm. The enzyme catalyses [protein]-peptidylproline (omega=180) = [protein]-peptidylproline (omega=0). Functionally, involved in protein export. Acts as a chaperone by maintaining the newly synthesized protein in an open conformation. Functions as a peptidyl-prolyl cis-trans isomerase. The sequence is that of Trigger factor from Nitratiruptor sp. (strain SB155-2).